Reading from the N-terminus, the 290-residue chain is MSQKQLWYEKLHSSFGQYFSIKEVLYRDKTDHQDLIIFDTEEFGRVMALNHVVQTTERDEFIYHEMMTHVPLLAHGDAKKVLIIGGGDGGILREVCRHAGVKEIIMVEIDQDVVNLCQEYFPHHHAGAYDDPRFQLKIDDGAHFVEQTNHRFDLIISDSTDPIGPGEHLFKSSFYQACRRILNAGGLFVAQNGVCFLQQTEVINTYQRLMPYFSDVSFYQAAIPTYYGGIMTFAWASENANLRRIGLNDLESRFADSGLKSCRYYNPFVHFASFALPQYLIEALAKKAPK.

Residues 5–238 (QLWYEKLHSS…GIMTFAWASE (234 aa)) form the PABS domain. Gln33 is a binding site for S-methyl-5'-thioadenosine. 2 residues coordinate spermidine: His64 and Asp88. Residues Glu108 and 140 to 141 (DG) contribute to the S-methyl-5'-thioadenosine site. Residue Asp158 is the Proton acceptor of the active site. Spermidine is bound at residue 158–161 (DSTD). Pro165 contributes to the S-methyl-5'-thioadenosine binding site.

It belongs to the spermidine/spermine synthase family. In terms of assembly, homodimer or homotetramer.

Its subcellular location is the cytoplasm. It carries out the reaction S-adenosyl 3-(methylsulfanyl)propylamine + putrescine = S-methyl-5'-thioadenosine + spermidine + H(+). The protein operates within amine and polyamine biosynthesis; spermidine biosynthesis; spermidine from putrescine: step 1/1. Functionally, catalyzes the irreversible transfer of a propylamine group from the amino donor S-adenosylmethioninamine (decarboxy-AdoMet) to putrescine (1,4-diaminobutane) to yield spermidine. The polypeptide is Polyamine aminopropyltransferase (Hamiltonella defensa subsp. Acyrthosiphon pisum (strain 5AT)).